A 167-amino-acid chain; its full sequence is Ribosome maturation factor RimM (167 aa).

Residues 94–165 (ENEYYYSDII…KIIITPMEGL (72 aa)) enclose the PRC barrel domain.

This sequence belongs to the RimM family. As to quaternary structure, binds ribosomal protein uS19.

It is found in the cytoplasm. In terms of biological role, an accessory protein needed during the final step in the assembly of 30S ribosomal subunit, possibly for assembly of the head region. Essential for efficient processing of 16S rRNA. May be needed both before and after RbfA during the maturation of 16S rRNA. It has affinity for free ribosomal 30S subunits but not for 70S ribosomes. The protein is Ribosome maturation factor RimM of Staphylococcus aureus (strain bovine RF122 / ET3-1).